A 561-amino-acid chain; its full sequence is Oligo-1,6-glucosidase 1 (561 aa).

D20, N22, D24, F26, and D28 together coordinate Ca(2+). D199 (nucleophile) is an active-site residue. Residue E255 is the Proton donor of the active site.

It belongs to the glycosyl hydrolase 13 family.

Its subcellular location is the cytoplasm. The enzyme catalyses Hydrolysis of (1-&gt;6)-alpha-D-glucosidic linkages in some oligosaccharides produced from starch and glycogen by alpha-amylase, and in isomaltose.. In terms of biological role, hydrolyzes various disaccharides such as sucrose, maltose, and isomaltose with different efficiencies. Also hydrolyzes longer maltodextrins from maltotriose up to maltohexaose, but not maltoheptaose, palatinose, isomaltotriose, or isomaltotetraose. The chain is Oligo-1,6-glucosidase 1 (malL) from Bacillus subtilis (strain 168).